The chain runs to 605 residues: Pyruvate decarboxylase 2 (605 aa).

Residues Asp68 and His155 each contribute to the substrate site. Positions 433 to 515 (DSWFNCQKLK…FLINNGGYTI (83 aa)) are thiamine pyrophosphate binding. Residues Asp483, Asn510, and Gly512 each contribute to the Mg(2+) site. Glu516 serves as a coordination point for substrate.

This sequence belongs to the TPP enzyme family. As to quaternary structure, homotetramer. It depends on a metal cation as a cofactor. Requires thiamine diphosphate as cofactor.

It carries out the reaction a 2-oxocarboxylate + H(+) = an aldehyde + CO2. This chain is Pyruvate decarboxylase 2 (PDC2), found in Oryza sativa subsp. japonica (Rice).